Consider the following 379-residue polypeptide: F-box protein At1g67340 (379 aa).

The 52-residue stretch at 41–92 (ADLLDSIPDDLVISILCKLGSTSRCPADFINVLLTCKRLKGLAMNPIVLSRL) folds into the F-box domain. Positions 304, 307, 320, 323, 329, 333, 342, and 346 each coordinate Zn(2+). The segment at 304 to 346 (HAGCGRPETRKHEFRRCSVCGVVNYCSRACQALDWKLRHKMDC) adopts an MYND-type; atypical zinc-finger fold. Residues 358-379 (GGEGNVQIDGNGNGDNVLLPMS) form a disordered region.

Part of a SCF (ASK-cullin-F-box) protein ligase complex. Interacts with SKP1A/ASK1, SKP1B/ASK2, ASK4, ASK11 and ASK13.

It is found in the nucleus. It participates in protein modification; protein ubiquitination. In terms of biological role, component of SCF(ASK-cullin-F-box) E3 ubiquitin ligase complexes, which may mediate the ubiquitination and subsequent proteasomal degradation of target proteins. The sequence is that of F-box protein At1g67340 from Arabidopsis thaliana (Mouse-ear cress).